The chain runs to 155 residues: MASRSAGTLITHNNATYIPPALMPGYRGHIPTASFTYGDTYGSTSARCFQDFRSTVLNSSRSPYCQGGQFPTGNASDPALVIGHRARGWDRFLHSPSWSRYNGDFKRAQELTQFHKAAEQHRDHYRDKSGSVHQVPHFIVPVKNPETFPLPQQVL.

It belongs to the CIMIP2 family.

The protein localises to the cytoplasm. It localises to the cytoskeleton. The protein resides in the cilium axoneme. Functionally, microtubule inner protein (MIP) part of the dynein-decorated doublet microtubules (DMTs) in cilia axoneme, which is required for motile cilia beating. In Xenopus tropicalis (Western clawed frog), this protein is Ciliary microtubule inner protein 2C (cimip2c).